A 59-amino-acid chain; its full sequence is Arabinogalactan protein 13 (59 aa).

The N-terminal stretch at 1–27 is a signal peptide; that stretch reads MEAMKMRLFVAVLVAAMAFSAVQQAAA. 4-hydroxyproline is present on residues P31, P33, and P35. P31, P33, and P35 each carry an O-linked (Ara...) hydroxyproline glycan. A lipid anchor (GPI-anchor amidated serine) is attached at S37. Residues 38 to 59 constitute a propeptide, removed in mature form; it reads DASLAIPAFFASVATLAFGFLF.

This sequence belongs to the AG-peptide AGP family. Post-translationally, contains 4-hydroxyproline; hydroxylated on Pro-31, Pro-33 and Pro-35. In terms of processing, O-glycosylated on hydroxyprolines; noncontiguous hydroxylproline residues are glycosylated with arabinogalactan.

It is found in the cell membrane. Its function is as follows. Proteoglycan that seems to be implicated in diverse developmental roles such as differentiation, cell-cell recognition, embryogenesis and programmed cell death. The polypeptide is Arabinogalactan protein 13 (Arabidopsis thaliana (Mouse-ear cress)).